Consider the following 315-residue polypeptide: Oxalate oxidoreductase subunit delta (315 aa).

2 4Fe-4S ferredoxin-type domains span residues 252 to 280 (QRPI…TRTE) and 281 to 310 (EGPV…NVPE). The [4Fe-4S] cluster site is built by Cys-261, Cys-264, Cys-267, Cys-271, Cys-290, Cys-293, Cys-296, and Cys-300.

In terms of assembly, dimer of heterotrimer of one alpha, one beta and one delta subunit. The cofactor is [4Fe-4S] cluster.

The catalysed reaction is oxidized 2[4Fe-4S]-[ferredoxin] + oxalate = reduced 2[4Fe-4S]-[ferredoxin] + 2 CO2. In terms of biological role, catalyzes the anaerobic oxidation of oxalate using a broad range of electron acceptors, including ferredoxin and the nickel-dependent carbon monoxide dehydrogenase. Does not require coenzyme A as cosubstrate. Enables anaerobic growth on oxalate which is used as energy source by the bacteria. In Moorella thermoacetica (strain ATCC 39073 / JCM 9320), this protein is Oxalate oxidoreductase subunit delta.